The chain runs to 64 residues: SPbeta prophage-derived uncharacterized protein YosJ (64 aa).

The polypeptide is SPbeta prophage-derived uncharacterized protein YosJ (yosJ) (Bacillus subtilis (strain 168)).